The chain runs to 902 residues: Ribonuclease E (902 aa).

In terms of domain architecture, S1 motif spans 39–119; the sequence is SNIYKGKITR…GTKGAALTTF (81 aa). Mg(2+) is bound by residues Asp303 and Asp346. Zn(2+) contacts are provided by Cys404 and Cys407. Positions 404-407 are required for zinc-mediated homotetramerization and catalytic activity; sequence CPRC. The segment at 881 to 902 is disordered; that stretch reads GKNSAGVHSATNFSNSPVSKLK. Over residues 889–902 the composition is skewed to polar residues; sequence SATNFSNSPVSKLK.

Belongs to the RNase E/G family. RNase E subfamily. Component of the RNA degradosome, which is a multiprotein complex involved in RNA processing and mRNA degradation. Within the RNA degradosome, RNase E assembles into a homotetramer formed by a dimer of dimers. Requires Zn(2+) as cofactor. Mg(2+) is required as a cofactor.

The protein localises to the cytoplasm. Its subcellular location is the cell inner membrane. The enzyme catalyses Endonucleolytic cleavage of single-stranded RNA in A- and U-rich regions.. Endoribonuclease that plays a central role in RNA processing and decay. Required for the maturation of 5S and 16S rRNAs and the majority of tRNAs. Also involved in the degradation of most mRNAs. This Buchnera aphidicola subsp. Acyrthosiphon pisum (strain APS) (Acyrthosiphon pisum symbiotic bacterium) protein is Ribonuclease E.